A 284-amino-acid chain; its full sequence is 2-dehydro-3-deoxyphosphooctonate aldolase (284 aa).

The protein belongs to the KdsA family.

It is found in the cytoplasm. It carries out the reaction D-arabinose 5-phosphate + phosphoenolpyruvate + H2O = 3-deoxy-alpha-D-manno-2-octulosonate-8-phosphate + phosphate. The protein operates within carbohydrate biosynthesis; 3-deoxy-D-manno-octulosonate biosynthesis; 3-deoxy-D-manno-octulosonate from D-ribulose 5-phosphate: step 2/3. It functions in the pathway bacterial outer membrane biogenesis; lipopolysaccharide biosynthesis. This is 2-dehydro-3-deoxyphosphooctonate aldolase from Erwinia tasmaniensis (strain DSM 17950 / CFBP 7177 / CIP 109463 / NCPPB 4357 / Et1/99).